The chain runs to 552 residues: Antibiotic resistance protein MAB_2355c (552 aa).

ABC transporter domains follow at residues 4–270 (VQLD…RRWD) and 332–552 (AKRA…PQWV). ATP contacts are provided by residues 37–44 (GPNGTGKT) and 364–371 (GGNGTGKS).

The protein belongs to the ABC transporter superfamily. ABCF family.

It catalyses the reaction ATP + H2O = ADP + phosphate + H(+). Its activity is regulated as follows. The ATPase activity can be inhibited by ribosome-targeting antibiotics. In terms of biological role, exhibits ATP hydrolysis activity and contributes to macrolide resistance by ribosome protection. Can also hydrolyze GTP, TTP and CTP but to a lesser extent than ATP. In vitro, rescues the transcription and translation activities affected by macrolides. Increased expression correlates with increased resistance to clarithromycin, one of the main drugs used to treat M.abscessus. In Mycobacteroides abscessus (strain ATCC 19977 / DSM 44196 / CCUG 20993 / CIP 104536 / JCM 13569 / NCTC 13031 / TMC 1543 / L948) (Mycobacterium abscessus), this protein is Antibiotic resistance protein MAB_2355c.